The chain runs to 290 residues: Triplex capsid protein 1 (290 aa).

This sequence belongs to the herpesviridae TRX1 protein family. In terms of assembly, interacts with TRX2, MCP and capsid vertex component 2/CVC2.

Its subcellular location is the virion. The protein resides in the host nucleus. Its function is as follows. Structural component of the T=16 icosahedral capsid. The capsid is composed of pentamers and hexamers of major capsid protein/MCP, which are linked together by heterotrimers called triplexes. These triplexes are formed by a single molecule of triplex protein 1/TRX1 and two copies of triplex protein 2/TRX2. Additionally, TRX1 is required for efficient transport of TRX2 to the nucleus, which is the site of capsid assembly. This is Triplex capsid protein 1 from Human cytomegalovirus (strain AD169) (HHV-5).